A 424-amino-acid polypeptide reads, in one-letter code: UDP-N-acetylglucosamine 1-carboxyvinyltransferase (424 aa).

22–23 (KN) contributes to the phosphoenolpyruvate binding site. R93 is a binding site for UDP-N-acetyl-alpha-D-glucosamine. The active-site Proton donor is C117. C117 carries the 2-(S-cysteinyl)pyruvic acid O-phosphothioketal modification. UDP-N-acetyl-alpha-D-glucosamine is bound by residues 122–126 (RPVDL), 162–165 (KVSV), D307, and I329.

The protein belongs to the EPSP synthase family. MurA subfamily.

It localises to the cytoplasm. The catalysed reaction is phosphoenolpyruvate + UDP-N-acetyl-alpha-D-glucosamine = UDP-N-acetyl-3-O-(1-carboxyvinyl)-alpha-D-glucosamine + phosphate. It participates in cell wall biogenesis; peptidoglycan biosynthesis. Functionally, cell wall formation. Adds enolpyruvyl to UDP-N-acetylglucosamine. The sequence is that of UDP-N-acetylglucosamine 1-carboxyvinyltransferase from Haemophilus influenzae (strain PittEE).